We begin with the raw amino-acid sequence, 430 residues long: Sesquiterpene synthase Agr5 (430 aa).

Residues 1–25 (MASSLLEPSLAAIALVILLASVSLS) form the signal peptide. N-linked (GlcNAc...) asparagine glycosylation occurs at asparagine 113. Aspartate 176, asparagine 311, serine 315, and glutamate 319 together coordinate Mg(2+). A DDXXD motif motif is present at residues 176–180 (DEYTD). Positions 401 and 402 each coordinate (2E,6E)-farnesyl diphosphate.

The protein belongs to the terpene synthase family. Requires Mg(2+) as cofactor.

It catalyses the reaction (2E,6E)-farnesyl diphosphate = viridiflorene + diphosphate. Terpene cyclase that catalyzes the cyclization of farnesyl diphosphate (FPP) to viridiflorene and viridiflorol. The sequence is that of Sesquiterpene synthase Agr5 from Cyclocybe aegerita (Black poplar mushroom).